Reading from the N-terminus, the 154-residue chain is Transcriptional repressor NrdR (154 aa).

Residues 3–34 (CPFCGAEDTAVADTRLNDEADVVRRRRKCNAC) fold into a zinc finger. The region spanning 49-139 (PQVVKKNGLR…VYRNFEDVDA (91 aa)) is the ATP-cone domain.

The protein belongs to the NrdR family. It depends on Zn(2+) as a cofactor.

Negatively regulates transcription of bacterial ribonucleotide reductase nrd genes and operons by binding to NrdR-boxes. This chain is Transcriptional repressor NrdR, found in Dechloromonas aromatica (strain RCB).